The chain runs to 199 residues: MTPKLILASSSPFRRMLMENAGLFFEAHPAEIDERAVEAPLEKAGAKPDTVACVLAKAKAEDVSARFPESLVIGSDQTMSLGDRVFHKPKDIADAANHLRALSGTTHRLNSAIVLVRDGAVLWEHVGHAELTMRPLTEDFIARHLSRVGERALSSVGAYQLEGEGVQLFEKIEGDYFTILGLPMLPLLGKLRELGTIDG.

The active-site Proton acceptor is the aspartate 76.

This sequence belongs to the Maf family. YceF subfamily. A divalent metal cation serves as cofactor.

It localises to the cytoplasm. The catalysed reaction is N(7)-methyl-GTP + H2O = N(7)-methyl-GMP + diphosphate + H(+). Its function is as follows. Nucleoside triphosphate pyrophosphatase that hydrolyzes 7-methyl-GTP (m(7)GTP). May have a dual role in cell division arrest and in preventing the incorporation of modified nucleotides into cellular nucleic acids. The sequence is that of 7-methyl-GTP pyrophosphatase from Rhizobium etli (strain ATCC 51251 / DSM 11541 / JCM 21823 / NBRC 15573 / CFN 42).